A 288-amino-acid polypeptide reads, in one-letter code: uncharacterized protein (288 aa).

Disordered stretches follow at residues 31–52 (KAVD…EAPS) and 179–288 (YPSK…VELK). Residues 206 to 217 (RPSSPTNFSKLI) are compositionally biased toward polar residues. Residues 221–236 (YKDEWLQQQADSDKRA) are compositionally biased toward basic and acidic residues. Composition is skewed to low complexity over residues 237–249 (PQTP…SPSP) and 267–276 (AAESSPLSSA).

This is an uncharacterized protein from Bos taurus (Bovine).